The primary structure comprises 269 residues: Putative phosphoenolpyruvate synthase regulatory protein (269 aa).

Residue 149–156 (GVSRSGKT) participates in ADP binding.

It belongs to the pyruvate, phosphate/water dikinase regulatory protein family. PSRP subfamily.

The catalysed reaction is [pyruvate, water dikinase] + ADP = [pyruvate, water dikinase]-phosphate + AMP + H(+). It carries out the reaction [pyruvate, water dikinase]-phosphate + phosphate + H(+) = [pyruvate, water dikinase] + diphosphate. Its function is as follows. Bifunctional serine/threonine kinase and phosphorylase involved in the regulation of the phosphoenolpyruvate synthase (PEPS) by catalyzing its phosphorylation/dephosphorylation. This Pseudoalteromonas translucida (strain TAC 125) protein is Putative phosphoenolpyruvate synthase regulatory protein.